The primary structure comprises 168 residues: Phosphopantetheine adenylyltransferase (168 aa).

Threonine 13 is a substrate binding site. ATP contacts are provided by residues 13–14 and histidine 21; that span reads TF. 3 residues coordinate substrate: lysine 45, leucine 78, and arginine 92. ATP-binding positions include 93–95, glutamate 103, and 128–134; these read GLR and TQFISSS.

It belongs to the bacterial CoaD family. As to quaternary structure, homohexamer. Requires Mg(2+) as cofactor.

The protein localises to the cytoplasm. It catalyses the reaction (R)-4'-phosphopantetheine + ATP + H(+) = 3'-dephospho-CoA + diphosphate. The protein operates within cofactor biosynthesis; coenzyme A biosynthesis; CoA from (R)-pantothenate: step 4/5. In terms of biological role, reversibly transfers an adenylyl group from ATP to 4'-phosphopantetheine, yielding dephospho-CoA (dPCoA) and pyrophosphate. This chain is Phosphopantetheine adenylyltransferase, found in Wolbachia pipientis wMel.